We begin with the raw amino-acid sequence, 186 residues long: UPF0340 protein SZO_02480 (186 aa).

Belongs to the UPF0340 family.

The sequence is that of UPF0340 protein SZO_02480 from Streptococcus equi subsp. zooepidemicus (strain H70).